An 89-amino-acid polypeptide reads, in one-letter code: Small ribosomal subunit protein uS15 (89 aa).

The tract at residues 1 to 25 (MSLDTTEKQQLINTHQTHGTDTGSA) is disordered. Residues 8-25 (KQQLINTHQTHGTDTGSA) are compositionally biased toward polar residues.

The protein belongs to the universal ribosomal protein uS15 family. In terms of assembly, part of the 30S ribosomal subunit. Forms a bridge to the 50S subunit in the 70S ribosome, contacting the 23S rRNA.

In terms of biological role, one of the primary rRNA binding proteins, it binds directly to 16S rRNA where it helps nucleate assembly of the platform of the 30S subunit by binding and bridging several RNA helices of the 16S rRNA. Forms an intersubunit bridge (bridge B4) with the 23S rRNA of the 50S subunit in the ribosome. The sequence is that of Small ribosomal subunit protein uS15 from Synechococcus sp. (strain CC9605).